Here is an 83-residue protein sequence, read N- to C-terminus: Small ribosomal subunit protein bS20 (83 aa).

This sequence belongs to the bacterial ribosomal protein bS20 family.

In terms of biological role, binds directly to 16S ribosomal RNA. The protein is Small ribosomal subunit protein bS20 of Staphylococcus carnosus (strain TM300).